The sequence spans 430 residues: Serine hydroxymethyltransferase 2 (430 aa).

Residues Leu-128 and 132–134 each bind (6S)-5,6,7,8-tetrahydrofolate; that span reads GHL. Position 237 is an N6-(pyridoxal phosphate)lysine (Lys-237).

Belongs to the SHMT family. In terms of assembly, homodimer. Requires pyridoxal 5'-phosphate as cofactor.

It localises to the cytoplasm. The enzyme catalyses (6R)-5,10-methylene-5,6,7,8-tetrahydrofolate + glycine + H2O = (6S)-5,6,7,8-tetrahydrofolate + L-serine. Its pathway is one-carbon metabolism; tetrahydrofolate interconversion. It functions in the pathway amino-acid biosynthesis; glycine biosynthesis; glycine from L-serine: step 1/1. Catalyzes the reversible interconversion of serine and glycine with tetrahydrofolate (THF) serving as the one-carbon carrier. This reaction serves as the major source of one-carbon groups required for the biosynthesis of purines, thymidylate, methionine, and other important biomolecules. Also exhibits THF-independent aldolase activity toward beta-hydroxyamino acids, producing glycine and aldehydes, via a retro-aldol mechanism. The protein is Serine hydroxymethyltransferase 2 of Rhodospirillum rubrum (strain ATCC 11170 / ATH 1.1.1 / DSM 467 / LMG 4362 / NCIMB 8255 / S1).